The following is a 336-amino-acid chain: Anthranilate phosphoribosyltransferase (336 aa).

Residues Gly-79, 82 to 83 (GD), Thr-87, 89 to 92 (NIST), 107 to 115 (KHGNRAMSS), and Ser-119 contribute to the 5-phospho-alpha-D-ribose 1-diphosphate site. Gly-79 is an anthranilate binding site. Mg(2+) is bound at residue Ser-91. Residue Asn-110 participates in anthranilate binding. Arg-165 contacts anthranilate. Residues Asp-225 and Glu-226 each coordinate Mg(2+).

Belongs to the anthranilate phosphoribosyltransferase family. In terms of assembly, homodimer. Mg(2+) serves as cofactor.

The enzyme catalyses N-(5-phospho-beta-D-ribosyl)anthranilate + diphosphate = 5-phospho-alpha-D-ribose 1-diphosphate + anthranilate. The protein operates within amino-acid biosynthesis; L-tryptophan biosynthesis; L-tryptophan from chorismate: step 2/5. Functionally, catalyzes the transfer of the phosphoribosyl group of 5-phosphorylribose-1-pyrophosphate (PRPP) to anthranilate to yield N-(5'-phosphoribosyl)-anthranilate (PRA). The polypeptide is Anthranilate phosphoribosyltransferase (Dictyoglomus thermophilum (strain ATCC 35947 / DSM 3960 / H-6-12)).